The sequence spans 4011 residues: MVQTPRQKKFGNEPIAIIGSACRFPGAASTPSKLWELLRKPKDLLTKIPPNRFNADSFYHPDGAHHGASNVTESYFLEEDPRLFDAAFFNVKPVEAHSIDPQHRMLLEVVYESLEAAGQSIEGLAKSQTGVFVGLMCADFSDHILRDLDAIPTYMATGTARSLISNRISYFFDWHGPSMTIDTACSSSLFAVHQAVQLLRSGDSDLAVAAGSNLILGPELYIGESKLKMLSPTGRSRMWDADADGYARGEGVAAVILKRLSDAIRDGDHIESIIRESGINSDGRTKGLTMPNELAQADLIVRTYQKAGLDPTKEEERCQYFEAHGTGTEAGDCREAEGISRAFFGYQGGNEGPAPPSQSEKLYVGSIKTVVGHTEGTAGLAGLLKASLAIQHSTIPPNMLFERLSPKVAPFYKGVEIATEAKPWPKASDVRRASVNSFGFGGANAHVILENYEPPAVAAAGTGAGAGDAASQTSFTPFVFSAASETALEGVLEAYAAHLRENPDLPLRDLSYTLHSRRSALGVRAALPAVASTQQLANSISDHLELARAGRNDKSAGQGASIGSRPIAATPRLLGVFTGQGAQWAAMGKELIQGSAFVRDRIKSLESALSDLPASARASWSLTDELLADAASSRLGEALLAQPLCTAVQIVLVDLLREAGIEFAAVVGHSSGEIAAAYAARIISAEEAIKIAYYRGLCVEEHVKTEGAMMAVGTSYEDATELCNLDAFSGRLGIAACNSPSSVTLSGDAAAIREAKDILDDEKKFARPLKVNKAYHSHHMAACSAPYKQALEACNIEPRQLAEEEGGCVWYSSVYPGTAMGTTAAHIEDLKGEYWKDNMLRPVLFAQALETAIERNEDSPFNLVIEVGPHPALKGPASETLTALYGKKQLPLPPYTGTLSRGSGDIAALSVTLGTAWSRFGSPFVNFAQYEALLTGEPRSARKVVPNLPTYKWDHDKVFWHDTRLSRAMRNRKELPNPLLGRRIPDGVTDEMRWRNIIRPSELPWISGHQLQGQMVYPAAAYLSTAIEACAFLAEGSVVESVEIRDFDLGKALVFDGNTEQTGVETLFSLSNIVKKGPKQITANFAFHAALGADADVLSRLGSGRVIVTLAGTGTGAGTGRLLLPPQRAPEPADTAEVREDEFYASLEKLGYEYTNDFRALSGMRRKLDHGSAYVRVPGHELAADAVLVHPALLDCALQAIFLAYWYPNDGSLDQLQVPTGIASLTVNTSLCRQDLAEGVRLPLESFLTEDPLSTATIGGDVEVYGRDGRTPLIQVQGVRITPLATRTGQADRQLFMENVWGPGAPDGTLAADNRAGAADFELASDLERLTIYFMRKLVRDIPPSQRQGLEWHHEALFDFVEHVLEQTANGRQRFCKPEWLDDTWESISHIRAKHPDSIEVELTHAVGENLAAAVRGETQILQHMFKDNLLNRYYVEALGIRETTAFLARTVAQIVHRYPHMDILEIGAGTGGATKAIFREIGRTFSSYTYTDISTGFFEKAQEVFAATADKMIFRALDIEKDVVEQGYREGAYDLIIGSLVLHATKSLDKTMRATRRLLKPGGYLVLLELTNLDVLRTGFAMSGLPGWWLGRDDGRRYSPCATSARWHQVLLGAGFSGIDTITPEVDVLPRPFSVIVSQAVEPRVNLLREPLSHPAESNASAADGGELVIVGGQSLATVILIDSVLDLTRHFGFAVTRLSSLDEFDAAAVSPTALVLNLAELDQPVFSNLTGETMRGLQSMLDYQRTILWVTQGCRAEQPYMSMSVGLGRTVALEAPGVKLQFLDLDISRKPNSKLVAEALIRLRFTRDEGSTRGILYSTEQELVEDDGRILVPRLLPIRPANERYNSSKRKITKLTEVGAESPALVLASTDAGYAVYEGASDDARAGASDDTAIIRVTASTLLPVIGNLYGVLGQEKDSGSWVLGLSSTNGSHVAVPRGQVRLVGDAILKEEAQQQQRLLLLALLAVEAQSSQILSAVPRDSKLLVNEPPAGLAGSLVRRAAERGTTVVFTASTTDAADLGLPHGHPVVSLSPLSSKRAVRAALPADVALFLDCSAEPEGVGLGSLIAACVPPSGQSIKLAELGEKLRQQPTLVDAPPSDTELASLPTLVDWSSGDKVPVSLQSVDSLIRFDGAKTYVLFGLTSDLGRSLVDWMASHGARNVVMTSRRPNIDPKWLEERRARGIRIQAFANDITDPAAVEDLVNSIRRSFPPIAGIMHGAMVLEDVPFSEMSLEIMNKVVRPKVMGTIHLDRLFQDEQLDFFVFFSSLASASGNRGQSNYSAANMYMTAKTFERRRKGLAASVLHLGAVMGIGYVMREASEIVFPAIRRAGFQWMDERAFRQCVAEAILAGRPDSGRSPEIVTGLRVINVDEEEPAPWMDNPRFQHCIVRGGTDSGAKKNQGGAAAGVKTRLLEAATPEEVLDIIRDSFLQKLQIMLQTELQTDDERANILAANAEDTGIDSLVAVEIRSWFQKEMDVDVPVLKILGGATMADLVAFAHEKLPEGLTPNLGNESAAAAAAAAAERSQSRVEITPAPDAVDTSRTSTTVFSAPPTLDPASSSTGSDHPTSVTSSGHTTPAHELETGLSPPSAPPCAPREQDVERTAPMSLGQSRFWFLRSYIEDQTTFNISFSVRLKGPLQVDKLESAIQTLGHRHQALRTAFVARPGQLLPDQAVLKRSLLRLEKRQIKEAAEASEAFEAMKNYVFAIERGESMRLVLLSLSPSDHFLVVGYHHINMDGASLEVFMADLMKLYTGRPLAPRPFQYPDFAAQQQLEVQQGKMDRDIAWWQDQLAGAALFRLLGTGDLCIGMADANRFEGDLASSVGMYLNLLPLRFRPSGDRTFRDTLKDVRRTAYAAMAHSHVPFDLVLNNLKIQRSTLHSPLFQAFINYRAGVAEKRSLGAVEGEGEQYHFGRSAYDISLDIMENPNSDPRLMFLVQEQLYSEHEANILADTYMHLLDLFARKPDSTLGSAPAFAPETAEEAIRLGRGNPVVSDWPQTIVHRVDDIIQRNPDTIAVREALGGRVWNYRQLRDRVGAIARALLAAGVTGGSRVALFQEPGFDWVSSLLAVMRVGAVFVPIDPGTPVERLAVIAAAARPAVALSHDATESAQEAALAVIRDAGGARVVNVSRGEGEGEGDVAGAGAPANLAQPDEAAVIFFTSGTTGVPKGAIVPHRGITNFMEHTCDIRGPEVVLFHSALGFDLAMWQCFSGLAHGGTLVVAPRSMRGDPVAITGLMAKEKITCTGATPSEYHTWIQYGFSKLAQSTSWRIAMTGGEQCTPKLVDDFRSLRLPGLRLWNCYGPSEVTVGSNQAEIPLSEPPQAPVTVGKAMPNRSVYILDDRLEPVCAGAPGEVVIGGVGVGLGYLGNDHLTAEKFVPDPFAPAGGSAKMYRTGDRGRLTRDGELEILGRIDGDSQIKLRGIRIEMQDVEQAILRSADGALASVCVTARGEPPTLVAHAVFRPDAPVPRRDRDAFLRRLASSLPLPQYMHPAVIVEIPSMPLNLHGKLDRRAVQELPTRVVAAKEEEEEKRPNGSSAAPLTQQELQLRSRVWERVIPEDVLSLYTVDRDTDFFHVGGNSMLLVEVQRRVKDEFGANLTIMRLFENSTLGAMAAAVHDAALESAGVDAAIDWEDETALTKDLADAVPSPEERAAAGRRRLDNNGPGGKVVVILTGATGFIGRELLARLLSSPDVAEVRCIAVRDPSRLADVVESNPGRVSVHAGDLTSVEETVGEEDEQRLFADAHAVIHCGADVSFLKTYATLRRANVGSTKALARLALRHGLDFHYVSTAATGRLLLVADPSSSPTARGDVFGEESVAAYPPPPGWLDHYVASKWASEAFLERAAARLGLRVWVHRPTSVTGPGAGETDVMSTVMRFAKKLRAVPVSSRWRGSLDFVPVETVADGIVGAVIRGGREHQQQQQQQETTPEEAGSVVPVKFLHHSGGLVIPIERLQSHLEEEDGVEYRTVPLGQWIEMAVAEGLNVLVAAYLASVDEMDTDIVFQAYVKG.

A Ketosynthase family 3 (KS3) domain is found at 12–451 (NEPIAIIGSA…GANAHVILEN (440 aa)). Catalysis depends on for beta-ketoacyl synthase activity residues Cys185, His324, and His373. Residues 576 to 903 (VFTGQGAQWA…PYTGTLSRGS (328 aa)) are acyl transferase (AT) domain. Residues 977–1113 (NPLLGRRIPD…GRVIVTLAGT (137 aa)) form an N-terminal hotdog fold region. In terms of domain architecture, PKS/mFAS DH spans 977–1290 (NPLLGRRIPD…ITPLATRTGQ (314 aa)). Positions 978–1287 (PLLGRRIPDG…GVRITPLATR (310 aa)) are dehydratase (DH) domain. The active-site Proton acceptor; for dehydratase activity is the His1009. Residues 1135 to 1290 (TAEVREDEFY…ITPLATRTGQ (156 aa)) form a C-terminal hotdog fold region. Residue Asp1195 is the Proton donor; for dehydratase activity of the active site. Residues 1434–1626 (YYVEALGIRE…FSGIDTITPE (193 aa)) are methyltransferase (MT) domain. Residues 2138 to 2311 (TYVLFGLTSD…AASVLHLGAV (174 aa)) form a ketoreductase (KR)domain region. Residues 2429 to 2504 (DSFLQKLQIM…DLVAFAHEKL (76 aa)) form the Carrier 1 domain. Ser2464 carries the post-translational modification O-(pantetheine 4'-phosphoryl)serine. The interval 2519–2607 (AAAAAAAERS…PREQDVERTA (89 aa)) is disordered. Polar residues predominate over residues 2559-2578 (PASSSTGSDHPTSVTSSGHT). Residues 2604 to 2975 (ERTAPMSLGQ…KPDSTLGSAP (372 aa)) are condensation. The segment at 3009 to 3414 (IIQRNPDTIA…GELEILGRID (406 aa)) is adenylation. A disordered region spans residues 3525–3544 (AKEEEEEKRPNGSSAAPLTQ). Over residues 3535–3544 (NGSSAAPLTQ) the composition is skewed to polar residues. The 81-residue stretch at 3541–3621 (PLTQQELQLR…AMAAAVHDAA (81 aa)) folds into the Carrier 2 domain. An O-(pantetheine 4'-phosphoryl)serine modification is found at Ser3581. The reductase-like stretch occupies residues 3671 to 3978 (VVILTGATGF…RTVPLGQWIE (308 aa)).

In the C-terminal section; belongs to the NRP synthetase family.

The enzyme catalyses L-leucine + 8 malonyl-CoA + 4 S-adenosyl-L-methionine + ATP + 9 NADPH + 12 H(+) = (5S)-5-(2-methylpropyl)-3-[(2E,6R,8E,10E,12E)-6,8,10,12-tetramethyltetradeca-2,8,10,12-tetraenoyl]-2,5-dihydro-1H-pyrrol-2-one + AMP + 4 S-adenosyl-L-homocysteine + 8 CO2 + diphosphate + 9 NADP(+) + 8 CoA + 7 H2O. The protein operates within mycotoxin biosynthesis. Hybrid PKS-NRPS synthetase; part of the gene cluster that mediates the biosynthesis of myceliothermophins, mycotoxins that contain a trans-fused decalin ring system connected to a conjugated 3-pyrrolin-2-one moiety and that have potential anti-tumor properties. The polyketide synthase module (PKS) of the PKS-NRPS mycA is responsible for the synthesis of the octaketide backbone. The downstream nonribosomal peptide synthetase (NRPS) module then amidates the carboxyl end of the octaketide with a leucine. A reductase-like domain (R) at the C-terminus catalyzes the reductive release of the polyketide-amino acid intermediate. Because mycA lacks a designated enoylreductase (ER) domain, the required activity is provided the enoyl reductase mycC. Following mycA-catalyzed construction and release of aminoacyl polyketide aldehyde, Knoevenagel condensation yields the expected ketone. This C18 keto acyclic precursor is the substrate of the Diels-Alderase mycB, that catalyzes the Diels-Alder cycloaddition to produce myceliothermophin E. A yet unknown oxygenase involved in the production of myceliothermophin A, via substitution with a hydroxyl group at the C21, has still to be identified. The sequence is that of Hybrid PKS-NRPS synthetase mycA from Thermothelomyces thermophilus (strain ATCC 42464 / BCRC 31852 / DSM 1799) (Sporotrichum thermophile).